The primary structure comprises 938 residues: Ankyrin repeat and LEM domain-containing protein 2 (938 aa).

The Lumenal portion of the chain corresponds to 1 to 12 (MLWPRLAAAEWA). A helical; Signal-anchor for type III membrane protein transmembrane segment spans residues 13 to 32 (ALAWELLGASVLLIAVRWLV). Residues 33–938 (RRLGPRPGGL…MARLAELAAL (906 aa)) lie on the Cytoplasmic side of the membrane. An LEM domain is found at 69-113 (LARLKLLNPDDLREEIVKAGLKCGPITSTTRFIFEKKLAQALLEQ). A phosphoserine mark is found at Ser259 and Ser268. The ANK repeat unit spans residues 411–440 (GYDTPLHFACKFGNADVVNVLSSHHLIVKN). Phosphoserine occurs at positions 488, 496, 512, and 528. The segment covering 609–627 (GKKAQQETGEREASCRDKA) has biased composition (basic and acidic residues). The disordered stretch occupies residues 609–636 (GKKAQQETGEREASCRDKATTSGSNSIS). 4 positions are modified to phosphoserine: Ser662, Ser804, Ser896, and Ser914. The interval 870–924 (RQSWPSPAVKGRFKSQLPDLSGPHSYSPGRNSVAGSNPAKPGLGSPGRYSPVHGS) is disordered.

Belongs to the ANKLE2 family. Interacts with BAF/BANF1. Interacts with protein phosphatase 2A (PP2A) components PPP2C (PPP2CA or PPP2CB) and PPP2R1A. In terms of assembly, (Microbial infection) May interact with non-structural protein 4A/NS4A from Zika virus strains Mr-766 or French Polynesia 10087PF/2013; the interaction may inhibit ANKLE2 function and contribute to defects in brain development, such as microcephaly.

The protein resides in the endoplasmic reticulum membrane. Its function is as follows. Involved in mitotic nuclear envelope reassembly by promoting dephosphorylation of BAF/BANF1 during mitotic exit. Coordinates the control of BAF/BANF1 dephosphorylation by inhibiting VRK1 kinase and promoting dephosphorylation of BAF/BANF1 by protein phosphatase 2A (PP2A), thereby facilitating nuclear envelope assembly. May regulate nuclear localization of VRK1 in non-dividing cells. It is unclear whether it acts as a real PP2A regulatory subunit or whether it is involved in recruitment of the PP2A complex. Involved in brain development. This chain is Ankyrin repeat and LEM domain-containing protein 2 (ANKLE2), found in Homo sapiens (Human).